A 376-amino-acid polypeptide reads, in one-letter code: Branched-chain-amino-acid aminotransferase, cytosolic (376 aa).

An N6-(pyridoxal phosphate)lysine modification is found at Lys202.

The protein belongs to the class-IV pyridoxal-phosphate-dependent aminotransferase family. Pyridoxal 5'-phosphate serves as cofactor.

It is found in the cytoplasm. It carries out the reaction L-leucine + 2-oxoglutarate = 4-methyl-2-oxopentanoate + L-glutamate. It catalyses the reaction L-isoleucine + 2-oxoglutarate = (S)-3-methyl-2-oxopentanoate + L-glutamate. The enzyme catalyses L-valine + 2-oxoglutarate = 3-methyl-2-oxobutanoate + L-glutamate. The catalysed reaction is a 2-oxocarboxylate + L-methionine = 4-methylsulfanyl-2-oxobutanoate + an L-alpha-amino acid. Its pathway is amino-acid biosynthesis; L-isoleucine biosynthesis; L-isoleucine from 2-oxobutanoate: step 4/4. The protein operates within amino-acid biosynthesis; L-leucine biosynthesis; L-leucine from 3-methyl-2-oxobutanoate: step 4/4. It participates in amino-acid biosynthesis; L-valine biosynthesis; L-valine from pyruvate: step 4/4. It functions in the pathway amino-acid biosynthesis; L-methionine biosynthesis via salvage pathway; L-methionine from S-methyl-5-thio-alpha-D-ribose 1-phosphate: step 6/6. Its function is as follows. Cytoplasmic isozyme of branched-chain-amino-acid aminotransferase, which catalyzes the first reaction in the catabolism of the essential branched chain amino acids (BCAAs) leucine, isoleucine, and valine. Catalyzes the formation of methionine from 2-keto-4-methylthiobutyrate (KMTB) in the methionine salvage pathway primarily using BCAAs (leucine, isoleucine, and valine) as well as lysine and proline as the amino donors. Involved in cell cycle regulation. In Saccharomyces cerevisiae (strain ATCC 204508 / S288c) (Baker's yeast), this protein is Branched-chain-amino-acid aminotransferase, cytosolic.